The sequence spans 282 residues: Small ribosomal subunit protein uS2 (282 aa).

The disordered stretch occupies residues A245–K266.

This sequence belongs to the universal ribosomal protein uS2 family.

The sequence is that of Small ribosomal subunit protein uS2 (rpsB) from Chlamydia trachomatis serovar D (strain ATCC VR-885 / DSM 19411 / UW-3/Cx).